Reading from the N-terminus, the 162-residue chain is Small ribosomal subunit protein uS9 (162 aa).

This sequence belongs to the universal ribosomal protein uS9 family.

This chain is Small ribosomal subunit protein uS9, found in Parvibaculum lavamentivorans (strain DS-1 / DSM 13023 / NCIMB 13966).